The sequence spans 289 residues: Protoheme IX farnesyltransferase 2 (289 aa).

9 consecutive transmembrane segments (helical) span residues 13–33, 37–57, 86–106, 109–129, 137–157, 159–179, 207–227, 232–252, and 267–287; these read LEIT…VPGS, IYDL…ASIF, LFFI…FILL, VTSA…TIIL, IVIG…SITG, VSAT…THFW, EFWI…PLFI, VGLL…YYVA, and AFHF…LILV.

It belongs to the UbiA prenyltransferase family. Protoheme IX farnesyltransferase subfamily.

It is found in the cell membrane. The catalysed reaction is heme b + (2E,6E)-farnesyl diphosphate + H2O = Fe(II)-heme o + diphosphate. The protein operates within porphyrin-containing compound metabolism; heme O biosynthesis; heme O from protoheme: step 1/1. Functionally, converts heme B (protoheme IX) to heme O by substitution of the vinyl group on carbon 2 of heme B porphyrin ring with a hydroxyethyl farnesyl side group. The chain is Protoheme IX farnesyltransferase 2 from Picrophilus torridus (strain ATCC 700027 / DSM 9790 / JCM 10055 / NBRC 100828 / KAW 2/3).